We begin with the raw amino-acid sequence, 286 residues long: ATP synthase gamma chain (286 aa).

It belongs to the ATPase gamma chain family. F-type ATPases have 2 components, CF(1) - the catalytic core - and CF(0) - the membrane proton channel. CF(1) has five subunits: alpha(3), beta(3), gamma(1), delta(1), epsilon(1). CF(0) has three main subunits: a, b and c.

It localises to the cell inner membrane. Functionally, produces ATP from ADP in the presence of a proton gradient across the membrane. The gamma chain is believed to be important in regulating ATPase activity and the flow of protons through the CF(0) complex. The protein is ATP synthase gamma chain of Shewanella amazonensis (strain ATCC BAA-1098 / SB2B).